Here is a 357-residue protein sequence, read N- to C-terminus: Probable dual-specificity RNA methyltransferase RlmN (357 aa).

Residue Glu-95 is the Proton acceptor of the active site. A Radical SAM core domain is found at Asn-106–Asp-340. The cysteines at positions 113 and 345 are disulfide-linked. Residues Cys-120, Cys-124, and Cys-127 each coordinate [4Fe-4S] cluster. S-adenosyl-L-methionine-binding positions include Gly-172–Glu-173, Ser-204, Ser-227–His-229, and Asn-302. The active-site S-methylcysteine intermediate is Cys-345.

The protein belongs to the radical SAM superfamily. RlmN family. [4Fe-4S] cluster is required as a cofactor.

Its subcellular location is the cytoplasm. It carries out the reaction adenosine(2503) in 23S rRNA + 2 reduced [2Fe-2S]-[ferredoxin] + 2 S-adenosyl-L-methionine = 2-methyladenosine(2503) in 23S rRNA + 5'-deoxyadenosine + L-methionine + 2 oxidized [2Fe-2S]-[ferredoxin] + S-adenosyl-L-homocysteine. The enzyme catalyses adenosine(37) in tRNA + 2 reduced [2Fe-2S]-[ferredoxin] + 2 S-adenosyl-L-methionine = 2-methyladenosine(37) in tRNA + 5'-deoxyadenosine + L-methionine + 2 oxidized [2Fe-2S]-[ferredoxin] + S-adenosyl-L-homocysteine. Its function is as follows. Specifically methylates position 2 of adenine 2503 in 23S rRNA and position 2 of adenine 37 in tRNAs. This Desulfitobacterium hafniense (strain DSM 10664 / DCB-2) protein is Probable dual-specificity RNA methyltransferase RlmN.